The following is a 468-amino-acid chain: ERO1-like protein alpha (468 aa).

Residues methionine 1 to glycine 23 form the signal peptide. Disulfide bonds link cysteine 35-cysteine 48, cysteine 37-cysteine 46, cysteine 85-cysteine 391, cysteine 94-cysteine 99, cysteine 94-cysteine 131, cysteine 99-cysteine 104, cysteine 208-cysteine 241, and cysteine 394-cysteine 397. 3 positions are modified to phosphoserine: serine 106, serine 143, and serine 145. FAD-binding residues include arginine 187, threonine 189, and tryptophan 200. Residues serine 252 and histidine 255 each coordinate FAD. N-linked (GlcNAc...) asparagine glycosylation occurs at asparagine 280. 2 residues coordinate FAD: arginine 287 and arginine 300. A glycan (N-linked (GlcNAc...) asparagine) is linked at asparagine 384.

This sequence belongs to the EROs family. In terms of assembly, predominantly monomer. May function both as a monomer and a homodimer. Interacts with PDILT. Interacts with ERP44; the interaction results in retention of ERO1A in the endoplasmic reticulum. Requires FAD as cofactor. In terms of processing, the Cys-94/Cys-99 and Cys-394/Cys-397 disulfide bonds constitute the redox-active center. The Cys-94/Cys-99 disulfide bond may accept electron from P4HB and funnel them to the active site disulfide Cys-394/Cys-397. The regulatory Cys-99/Cys-104 disulfide bond stabilizes the other regulatory bond Cys-94/Cys-131. Phosphorylated on Ser-145 by FAM20C in the Golgi which increases its enzymatic activity. Phosphorylation is induced by lactation. It is also induced by hypoxia and reductive stress.

The protein resides in the endoplasmic reticulum membrane. The protein localises to the golgi apparatus lumen. Its subcellular location is the secreted. It localises to the cell projection. It is found in the dendrite. With respect to regulation, enzyme activity is tightly regulated to prevent the accumulation of reactive oxygen species in the endoplasmic reticulum. Reversibly down-regulated by the formation of disulfide bonds between the active site Cys-94 and Cys-131, and between Cys-99 and Cys-104. Glutathione may be required to regulate its activity in the endoplasmic reticulum. Functionally, oxidoreductase involved in disulfide bond formation in the endoplasmic reticulum. Efficiently reoxidizes P4HB/PDI, the enzyme catalyzing protein disulfide formation, in order to allow P4HB to sustain additional rounds of disulfide formation. Following P4HB reoxidation, passes its electrons to molecular oxygen via FAD, leading to the production of reactive oxygen species (ROS) in the cell. Required for the proper folding of immunoglobulins. Plays an important role in ER stress-induced, CHOP-dependent apoptosis by activating the inositol 1,4,5-trisphosphate receptor IP3R1. This chain is ERO1-like protein alpha, found in Sus scrofa (Pig).